The sequence spans 883 residues: Probable valine--tRNA ligase, cytoplasmic (883 aa).

Positions 1-23 (MTLKMDRKALKEEKKKQKLEKFL) are enriched in basic and acidic residues. The tract at residues 1-49 (MTLKMDRKALKEEKKKQKLEKFLNKKTTQSKISKAPKPAKNKSSSGYDP) is disordered. The segment covering 30–45 (SKISKAPKPAKNKSSS) has biased composition (low complexity). A 'HIGH' region motif is present at residues 82–92 (PNITGSLHIGH). Residues 586-590 (KMSKS) carry the 'KMSKS' region motif. Lys589 lines the ATP pocket.

This sequence belongs to the class-I aminoacyl-tRNA synthetase family.

Its subcellular location is the cytoplasm. It catalyses the reaction tRNA(Val) + L-valine + ATP = L-valyl-tRNA(Val) + AMP + diphosphate. This is Probable valine--tRNA ligase, cytoplasmic from Vairimorpha ceranae (strain BRL01) (Microsporidian parasite).